The sequence spans 127 residues: DNA-directed RNA polymerase subunit omega (127 aa).

It belongs to the RNA polymerase subunit omega family. In terms of assembly, the RNAP catalytic core consists of 2 alpha, 1 beta, 1 beta' and 1 omega subunit. When a sigma factor is associated with the core the holoenzyme is formed, which can initiate transcription.

The enzyme catalyses RNA(n) + a ribonucleoside 5'-triphosphate = RNA(n+1) + diphosphate. Functionally, promotes RNA polymerase assembly. Latches the N- and C-terminal regions of the beta' subunit thereby facilitating its interaction with the beta and alpha subunits. The protein is DNA-directed RNA polymerase subunit omega of Rickettsia africae (strain ESF-5).